A 297-amino-acid polypeptide reads, in one-letter code: Urease accessory protein UreD (297 aa).

A disordered region spans residues 1 to 41; that stretch reads MPQAADIATAPQRPSAPGDVVAAGQPPRARGRAHVSSKRRD.

Belongs to the UreD family. UreD, UreF and UreG form a complex that acts as a GTP-hydrolysis-dependent molecular chaperone, activating the urease apoprotein by helping to assemble the nickel containing metallocenter of UreC. The UreE protein probably delivers the nickel.

It is found in the cytoplasm. Its function is as follows. Required for maturation of urease via the functional incorporation of the urease nickel metallocenter. In Ruegeria sp. (strain TM1040) (Silicibacter sp.), this protein is Urease accessory protein UreD.